Reading from the N-terminus, the 230-residue chain is CDP-diacylglycerol--inositol 3-phosphatidyltransferase (230 aa).

At 1–28 (MPSAKSSDLSPTKTNLESTTKQKVSVQD) the chain is on the cytoplasmic side. A helical transmembrane segment spans residues 29 to 51 (IFLYIPNLIGYLRIITAIISFLC). Over 52 to 57 (MANHPV) the chain is Lumenal. Residues 58 to 77 (ATLIFYGISGFLDAFDGYAA) traverse the membrane as a helical segment. Asp-70 and Asp-73 together coordinate Mg(2+). A CDP-1,2-diacyl-sn-glycerol is bound by residues Gly-74, Arg-78, and Thr-84. The Cytoplasmic segment spans residues 78 to 89 (RKFNQGTRFGAV). A helical membrane pass occupies residues 90 to 110 (LDMVTDRCATSSLIVYLGVLY). Asp-91 and Asp-95 together coordinate Mg(2+). Catalysis depends on Asp-95, which acts as the Proton acceptor. The Lumenal portion of the chain corresponds to 111–112 (PQ). Residues 113–133 (YTVFWQILVSLDLSSHYMHMY) traverse the membrane as a helical segment. The Cytoplasmic segment spans residues 134–161 (AMLSAGSTSHKNVDETQSKLLSLYYNNR). Residues 162-182 (LVLFFVCLINELFYMAVYLHY) traverse the membrane as a helical segment. Over 183-184 (YK) the chain is Lumenal. A helical transmembrane segment spans residues 185–205 (FFWLGTVMLVASTPIWLFKQI). The Cytoplasmic portion of the chain corresponds to 206 to 230 (ANIIQLKNASLILARMDAHDHSKRD).

The protein belongs to the CDP-alcohol phosphatidyltransferase class-I family. Mn(2+) is required as a cofactor. It depends on Mg(2+) as a cofactor.

It is found in the endoplasmic reticulum membrane. It carries out the reaction a CDP-1,2-diacyl-sn-glycerol + myo-inositol = a 1,2-diacyl-sn-glycero-3-phospho-(1D-myo-inositol) + CMP + H(+). Inhibited by calcium and zinc ions. Inhibited by nucleoside triphosphates and diphosphates. Functionally, catalyzes the synthesis of phosphatidylinositol (PtdIns). Required for proper membrane dynamics and cell wall integrity. This is CDP-diacylglycerol--inositol 3-phosphatidyltransferase from Candida albicans (strain SC5314 / ATCC MYA-2876) (Yeast).